A 399-amino-acid polypeptide reads, in one-letter code: Phosphoglycerate kinase (399 aa).

Substrate-binding positions include 22–24 (DFN), Arg38, 61–64 (HLGR), Arg120, and Arg153. ATP-binding positions include Lys206, Gly297, Glu328, and 354–357 (GGDT).

It belongs to the phosphoglycerate kinase family. Monomer.

The protein resides in the cytoplasm. The enzyme catalyses (2R)-3-phosphoglycerate + ATP = (2R)-3-phospho-glyceroyl phosphate + ADP. Its pathway is carbohydrate degradation; glycolysis; pyruvate from D-glyceraldehyde 3-phosphate: step 2/5. The chain is Phosphoglycerate kinase from Campylobacter concisus (strain 13826).